A 551-amino-acid chain; its full sequence is MSALLSEDYLNDYISPALACTKPTEIKKEKFVTEDGEFQVGVEPQELEKVTISLSDCLACSGCITSSEEIMLSQQSHSVFLDAWRELGFDKCGSAGDAQCTNKLVVSISPHCRASMARYYGVDVDAADYAILRVFKEVFHATSVIGDGAGRLLSVKRVVEELMERRKASQGTALSSICPGFLIYTEKTKPKLVPMLLNVKSAQQVTGALFKEIALEEGYDVDTSLKDGKRTNVQYHLTIVPCFDKKLEASRPDGEGEVNCVITPREVLAMLGEMGVSFRKYLGDWASLDKQLQQSQLGMLRAEMSPAGWDPLLHWSIPANGDGYSDGYAYQYACTVRDAHVASGCAAQVVSVPGKNADVLEYRVVEPSSEGGKVIARACVLSGFRNIQNLCRKLDPSGHKKRSVRRVAALRSRGRKDSSSEDSTGTPSAISNALGGTANPAECDYVEVSACPSGSINGGGLLMELAPEREEMGETPLPSSTIGGNARRRQQQLQELQAMYKAQIRITDETPTSLPPAALPPLPPQYTMQYTFYIQEEDPAKPDIVTVGNTW.

Positions 20, 57, 60, 63, 178, and 242 each coordinate [4Fe-4S] cluster. Residues 395–435 are disordered; it reads DPSGHKKRSVRRVAALRSRGRKDSSSEDSTGTPSAISNALG. The span at 421-431 shows a compositional bias: polar residues; that stretch reads EDSTGTPSAIS. [4Fe-4S] cluster is bound at residue Cys-451.

The protein belongs to the NARF family.

Its function is as follows. Component of the cytosolic Fe/S protein assembly machinery. Required for maturation of extramitochondrial Fe/S proteins. May play a role in the transfer of pre-assembled Fe/S clusters to target apoproteins. This chain is Cytosolic Fe-S cluster assembly factor NAR1 (NAR1), found in Candida glabrata (strain ATCC 2001 / BCRC 20586 / JCM 3761 / NBRC 0622 / NRRL Y-65 / CBS 138) (Yeast).